The sequence spans 149 residues: 3-hydroxyacyl-[acyl-carrier-protein] dehydratase FabZ (149 aa).

The active site involves His53.

This sequence belongs to the thioester dehydratase family. FabZ subfamily.

Its subcellular location is the cytoplasm. The enzyme catalyses a (3R)-hydroxyacyl-[ACP] = a (2E)-enoyl-[ACP] + H2O. Involved in unsaturated fatty acids biosynthesis. Catalyzes the dehydration of short chain beta-hydroxyacyl-ACPs and long chain saturated and unsaturated beta-hydroxyacyl-ACPs. In Neisseria gonorrhoeae (strain ATCC 700825 / FA 1090), this protein is 3-hydroxyacyl-[acyl-carrier-protein] dehydratase FabZ.